The primary structure comprises 255 residues: MSLSIRVNEKAFGKGSFKTSVLQDVNLTVENGEFLTVIGPSGCGKSTLLKIAAGLDGDYEGRISMNGREIKGPGIQQGFIFQEHRLFPWMTVEQNIAADLSLKEPAVRKKVDELIETVRLKGAEKQYPRELSGGMSQRVAIARALLREPEILLLDEPFGALDAFTRKHLQDVLTDIWREKKMTMILVTHDIDESVYLANRIAILTAKPGRIHKLIPVDLPFPRSRTSPVFQTIRQKVLKEFETTETFSFQEGSGI.

Residues 5–231 (IRVNEKAFGK…PRSRTSPVFQ (227 aa)) form the ABC transporter domain. Residue 39 to 46 (GPSGCGKS) coordinates ATP.

It belongs to the ABC transporter superfamily. Aliphatic sulfonates importer (TC 3.A.1.17.2) family. In terms of assembly, the complex is composed of two ATP-binding proteins (SsuB), two transmembrane proteins (SsuC) and a solute-binding protein (SsuA).

It localises to the cell membrane. It carries out the reaction ATP + H2O + aliphatic sulfonate-[sulfonate-binding protein]Side 1 = ADP + phosphate + aliphatic sulfonateSide 2 + [sulfonate-binding protein]Side 1.. Functionally, part of the ABC transporter complex SsuABC involved in aliphatic sulfonates import. Responsible for energy coupling to the transport system. The polypeptide is Aliphatic sulfonates import ATP-binding protein SsuB (Bacillus licheniformis (strain ATCC 14580 / DSM 13 / JCM 2505 / CCUG 7422 / NBRC 12200 / NCIMB 9375 / NCTC 10341 / NRRL NRS-1264 / Gibson 46)).